The following is a 248-amino-acid chain: Triosephosphate isomerase (248 aa).

A substrate-binding site is contributed by 9–11 (NWK). The Electrophile role is filled by His-94. The active-site Proton acceptor is Glu-166. Residues Gly-172, Ser-212, and 233-234 (GG) contribute to the substrate site.

The protein belongs to the triosephosphate isomerase family. As to quaternary structure, homodimer.

The protein resides in the cytoplasm. The catalysed reaction is D-glyceraldehyde 3-phosphate = dihydroxyacetone phosphate. Its pathway is carbohydrate biosynthesis; gluconeogenesis. It participates in carbohydrate degradation; glycolysis; D-glyceraldehyde 3-phosphate from glycerone phosphate: step 1/1. Functionally, involved in the gluconeogenesis. Catalyzes stereospecifically the conversion of dihydroxyacetone phosphate (DHAP) to D-glyceraldehyde-3-phosphate (G3P). This is Triosephosphate isomerase from Alkaliphilus metalliredigens (strain QYMF).